Consider the following 33-residue polypeptide: Gastrin (33 aa).

Pyrrolidone carboxylic acid is present on residues Q1 and Q18. At Y28 the chain carries Sulfotyrosine. Residue F33 is modified to Phenylalanine amide.

Belongs to the gastrin/cholecystokinin family.

It is found in the secreted. Gastrin stimulates the stomach mucosa to produce and secrete hydrochloric acid and the pancreas to secrete its digestive enzymes. It also stimulates smooth muscle contraction and increases blood circulation and water secretion in the stomach and intestine. The protein is Gastrin (GAST) of Didelphis virginiana (North American opossum).